The sequence spans 271 residues: 3-methyl-2-oxobutanoate hydroxymethyltransferase (271 aa).

Asp53 and Asp92 together coordinate Mg(2+). 3-methyl-2-oxobutanoate-binding positions include 53-54 (DS), Asp92, and Lys120. Mg(2+) is bound at residue Glu122. Glu189 acts as the Proton acceptor in catalysis.

The protein belongs to the PanB family. As to quaternary structure, homodecamer; pentamer of dimers. Mg(2+) serves as cofactor.

Its subcellular location is the cytoplasm. The enzyme catalyses 3-methyl-2-oxobutanoate + (6R)-5,10-methylene-5,6,7,8-tetrahydrofolate + H2O = 2-dehydropantoate + (6S)-5,6,7,8-tetrahydrofolate. It functions in the pathway cofactor biosynthesis; (R)-pantothenate biosynthesis; (R)-pantoate from 3-methyl-2-oxobutanoate: step 1/2. In terms of biological role, catalyzes the reversible reaction in which hydroxymethyl group from 5,10-methylenetetrahydrofolate is transferred onto alpha-ketoisovalerate to form ketopantoate. In Burkholderia thailandensis (strain ATCC 700388 / DSM 13276 / CCUG 48851 / CIP 106301 / E264), this protein is 3-methyl-2-oxobutanoate hydroxymethyltransferase.